Consider the following 395-residue polypeptide: Na(+)/H(+) antiporter NhaA 1 (395 aa).

Helical transmembrane passes span 11-31 (FFSSDASGGIVLIIAAALAMV), 63-83 (MLLWINDALMAVFFLLIGLEV), 99-119 (VFPVIAALGGMIVPALVYLAF), 129-149 (GWAIPAATDIAFALGVLALLG), 158-178 (IFLMALAIIDDLGAIVIIALF), 183-203 (LSMLSLGVAAAAIAVLMALNL), 223-243 (VLKSGVHATLAGVIVGFMIPL), 258-278 (VLHPWVAFMILPLFAFANAGV), 282-302 (GVTLAGLTSLLPLGIMAGLFI), 332-352 (IMAVGILCGIGFTMSIFIATL), and 364-384 (WAKLGILIGSVLSAVVGYLIL).

This sequence belongs to the NhaA Na(+)/H(+) (TC 2.A.33) antiporter family.

The protein resides in the cell inner membrane. The catalysed reaction is Na(+)(in) + 2 H(+)(out) = Na(+)(out) + 2 H(+)(in). Functionally, na(+)/H(+) antiporter that extrudes sodium in exchange for external protons. The protein is Na(+)/H(+) antiporter NhaA 1 of Klebsiella pneumoniae subsp. pneumoniae (strain ATCC 700721 / MGH 78578).